Consider the following 145-residue polypeptide: DnaJ homolog subfamily B member 3 (145 aa).

Positions M1–G69 constitute a J domain.

As to expression, expressed in sperm (at protein level).

May operate as a co-chaperone of the male germ cell- and haploid stage-specific Hsp70 proteins. The sequence is that of DnaJ homolog subfamily B member 3 (DNAJB3) from Homo sapiens (Human).